A 282-amino-acid chain; its full sequence is Bifunctional protein FolD (282 aa).

Residues 165 to 167, serine 190, and isoleucine 231 each bind NADP(+); that span reads NRS.

The protein belongs to the tetrahydrofolate dehydrogenase/cyclohydrolase family. In terms of assembly, homodimer.

It carries out the reaction (6R)-5,10-methylene-5,6,7,8-tetrahydrofolate + NADP(+) = (6R)-5,10-methenyltetrahydrofolate + NADPH. The catalysed reaction is (6R)-5,10-methenyltetrahydrofolate + H2O = (6R)-10-formyltetrahydrofolate + H(+). It functions in the pathway one-carbon metabolism; tetrahydrofolate interconversion. Catalyzes the oxidation of 5,10-methylenetetrahydrofolate to 5,10-methenyltetrahydrofolate and then the hydrolysis of 5,10-methenyltetrahydrofolate to 10-formyltetrahydrofolate. In Clostridium botulinum (strain Okra / Type B1), this protein is Bifunctional protein FolD.